Here is a 214-residue protein sequence, read N- to C-terminus: Mediator of RNA polymerase II transcription subunit 29 (214 aa).

Residues 1–78 (MMNQMGMHMQ…QQQSQQTEKV (78 aa)) are disordered. Gly residues predominate over residues 15 to 34 (VPGGPGGPVGMAGGPVGGVG). A compositionally biased stretch (low complexity) spans 44–74 (QMQQQQQVAAQQQQQQQQQQQAQAHQQQSQQ).

This sequence belongs to the Mediator complex subunit 29 family. In terms of assembly, component of the Mediator complex.

It is found in the nucleus. Component of the Mediator complex, a coactivator involved in the regulated transcription of nearly all RNA polymerase II-dependent genes. Mediator functions as a bridge to convey information from gene-specific regulatory proteins to the basal RNA polymerase II transcription machinery. Mediator is recruited to promoters by direct interactions with regulatory proteins and serves as a scaffold for the assembly of a functional preinitiation complex with RNA polymerase II and the general transcription factors. This chain is Mediator of RNA polymerase II transcription subunit 29 (ix), found in Aedes aegypti (Yellowfever mosquito).